We begin with the raw amino-acid sequence, 347 residues long: MRLAVIPGDGIGPEVVAEALKVLGEVVPDTEITRYDLGAARWHATGELLPESVLGELRQHDAILLGAVGDPSVPSGILERGLLLRLRFELDHHVNLRPARLYPGVKSPVSDPGEIDMVVVREGTEGPYAGNGGLLRKDTTHEIATEVSINTAFGVERVVRDAFARAASRPRKHLTLVHKTNVLTHAGSLWSRVVEEVSLQHPDVTVAYQHVDATTIHMVTDPSRFDVIVTDNLFGDIITDLAGAITGGIGLAASGNIDATRRNPSMFEPVHGSAPDIAGQGTADPTAAVLSVALLLDHVGQSEAARRVEAAVAFDLATRDHSAPGATFAIGDRLAALVSSREVAQQA.

Substrate is bound by residues R87, R97, R121, and D212. Mg(2+) is bound by residues D212, D236, and D240. G272 to D284 serves as a coordination point for NAD(+).

Belongs to the isocitrate and isopropylmalate dehydrogenases family. LeuB type 2 subfamily. As to quaternary structure, homodimer. The cofactor is Mg(2+). Mn(2+) serves as cofactor.

It is found in the cytoplasm. The enzyme catalyses (2R,3S)-3-isopropylmalate + NAD(+) = 4-methyl-2-oxopentanoate + CO2 + NADH. It functions in the pathway amino-acid biosynthesis; L-leucine biosynthesis; L-leucine from 3-methyl-2-oxobutanoate: step 3/4. Functionally, catalyzes the oxidation of 3-carboxy-2-hydroxy-4-methylpentanoate (3-isopropylmalate) to 3-carboxy-4-methyl-2-oxopentanoate. The product decarboxylates to 4-methyl-2 oxopentanoate. This is 3-isopropylmalate dehydrogenase from Saccharopolyspora erythraea (strain ATCC 11635 / DSM 40517 / JCM 4748 / NBRC 13426 / NCIMB 8594 / NRRL 2338).